Reading from the N-terminus, the 390-residue chain is MAFNFAAILAFVSLAAVTSAAPSKTTCSNGVVVPDAVCCDFVPLASALQSEVLMGDCGEDAHELVRLIFHDAIAISQSMGPSAGGGADGSMLIFPTVEPAFFPNLGIADSVNNLIPFLSQFPTISAGDLVQFAGAVAISNCPGAPQLEFLAGRPNATAPAIDGLIPEPQDDVTKILARFKDAGNFSPAEVVALLASHSIARADHVDPTLDAAPFDSTPFDFDTQIFLEVLLKGVGFPGLANNTGEVSSPLPVTDGTDVGELRLQSDFALARDERTACAWQSFVNEQEAMATAFKNAVKKLAVLGHNRNDLVDCSAVVPVPKPATGTPATFPASTGPQDLELTCTTEPFPTLSTAPGAQQTLIPHCSDGTMTCNSVQFDGPATNFGGADDS.

Residues 1–23 (MAFNFAAILAFVSLAAVTSAAPS) form the signal peptide. Disulfide bonds link Cys27–Cys39, Cys38–Cys313, Cys57–Cys141, Cys277–Cys343, and Cys365–Cys372. Residues Glu59 and Glu63 each contribute to the Mn(2+) site. His70 functions as the Proton acceptor in the catalytic mechanism. Ca(2+) is bound by residues Asp71, Gly86, Asp88, and Ser90. Asn155 carries an N-linked (GlcNAc...) asparagine glycan. Residue His197 coordinates heme b. Ser198 contacts Ca(2+). Residue Asp203 participates in Mn(2+) binding. Residues Asp215, Thr217, and Asp222 each contribute to the Ca(2+) site. N-linked (GlcNAc...) asparagine glycosylation is present at Asn241.

This sequence belongs to the peroxidase family. Ligninase subfamily. Requires heme b as cofactor. Ca(2+) is required as a cofactor.

The protein localises to the secreted. The catalysed reaction is 2 Mn(2+) + H2O2 + 2 H(+) = 2 Mn(3+) + 2 H2O. Its function is as follows. Catalyzes the oxidation of Mn(2+) to Mn(3+). The latter, acting as a diffusible redox mediator, is capable of oxidizing a variety of lignin compounds. The sequence is that of Manganese peroxidase 2 (mnp2) from Phlebia radiata (White-rot fungus).